The primary structure comprises 534 residues: Calcium-dependent protein kinase 18 (534 aa).

The interval 1 to 49 (MGLCFSSPKATRRGTGSRNPNPDSPTQGKASEKVSNKNKKNTKKIQLRH) is disordered. Glycine 2 is lipidated: N-myristoyl glycine. Residues 14 to 29 (GTGSRNPNPDSPTQGK) show a composition bias toward polar residues. Positions 36 to 47 (NKNKKNTKKIQL) are enriched in basic residues. Residues 71 to 331 (YTIGKLLGHG…AAQALSHSWV (261 aa)) form the Protein kinase domain. Residues 77-85 (LGHGQFGFT) and lysine 100 each bind ATP. Residue aspartate 197 is the Proton acceptor of the active site. Serine 237 is subject to Phosphoserine. Residues 337–367 (ASEVPIDISVLNNMRQFVKFSRLKQIALRAL) are autoinhibitory domain. EF-hand domains follow at residues 374–409 (DELDDLRDQFDAIDIDKNGSISLEEMRQALAKDVPW), 411–446 (LKDARVAEILQANDSNTDGLVDFTEFVVAALHVNQL), 453–488 (KWQQRSRAAFDKFDIDGDGFITPEELRLQTGLKGSI), and 491–518 (LLEEADVDEDGRISINEFRRLLRSASLK). Residues aspartate 387, aspartate 389, asparagine 391, serine 393, glutamate 398, aspartate 424, asparagine 426, aspartate 428, glutamate 435, aspartate 466, aspartate 468, aspartate 470, glutamate 477, aspartate 496, aspartate 498, aspartate 500, and arginine 502 each coordinate Ca(2+). Serine 504 carries the phosphoserine modification. Residue glutamate 507 coordinates Ca(2+).

It belongs to the protein kinase superfamily. Ser/Thr protein kinase family. CDPK subfamily.

Its subcellular location is the membrane. It catalyses the reaction L-seryl-[protein] + ATP = O-phospho-L-seryl-[protein] + ADP + H(+). The catalysed reaction is L-threonyl-[protein] + ATP = O-phospho-L-threonyl-[protein] + ADP + H(+). With respect to regulation, activated by calcium. Autophosphorylation may play an important role in the regulation of the kinase activity. In terms of biological role, may play a role in signal transduction pathways that involve calcium as a second messenger. This chain is Calcium-dependent protein kinase 18 (CPK18), found in Arabidopsis thaliana (Mouse-ear cress).